Reading from the N-terminus, the 321-residue chain is tRNA U34 carboxymethyltransferase (321 aa).

Residues Lys90, Trp104, Lys109, Gly129, 151–153 (DPT), 180–181 (IE), Met195, Tyr199, and Arg314 contribute to the carboxy-S-adenosyl-L-methionine site.

It belongs to the class I-like SAM-binding methyltransferase superfamily. CmoB family. In terms of assembly, homotetramer.

The enzyme catalyses carboxy-S-adenosyl-L-methionine + 5-hydroxyuridine(34) in tRNA = 5-carboxymethoxyuridine(34) in tRNA + S-adenosyl-L-homocysteine + H(+). In terms of biological role, catalyzes carboxymethyl transfer from carboxy-S-adenosyl-L-methionine (Cx-SAM) to 5-hydroxyuridine (ho5U) to form 5-carboxymethoxyuridine (cmo5U) at position 34 in tRNAs. This chain is tRNA U34 carboxymethyltransferase, found in Haemophilus influenzae (strain 86-028NP).